The primary structure comprises 104 residues: Pyrimidine/purine nucleoside phosphorylase (104 aa).

It belongs to the nucleoside phosphorylase PpnP family.

The catalysed reaction is a purine D-ribonucleoside + phosphate = a purine nucleobase + alpha-D-ribose 1-phosphate. It carries out the reaction adenosine + phosphate = alpha-D-ribose 1-phosphate + adenine. It catalyses the reaction cytidine + phosphate = cytosine + alpha-D-ribose 1-phosphate. The enzyme catalyses guanosine + phosphate = alpha-D-ribose 1-phosphate + guanine. The catalysed reaction is inosine + phosphate = alpha-D-ribose 1-phosphate + hypoxanthine. It carries out the reaction thymidine + phosphate = 2-deoxy-alpha-D-ribose 1-phosphate + thymine. It catalyses the reaction uridine + phosphate = alpha-D-ribose 1-phosphate + uracil. The enzyme catalyses xanthosine + phosphate = alpha-D-ribose 1-phosphate + xanthine. Its function is as follows. Catalyzes the phosphorolysis of diverse nucleosides, yielding D-ribose 1-phosphate and the respective free bases. Can use uridine, adenosine, guanosine, cytidine, thymidine, inosine and xanthosine as substrates. Also catalyzes the reverse reactions. This Geotalea daltonii (strain DSM 22248 / JCM 15807 / FRC-32) (Geobacter daltonii) protein is Pyrimidine/purine nucleoside phosphorylase.